Reading from the N-terminus, the 641-residue chain is Methylenetetrahydrofolate reductase 2 (641 aa).

Glutamate 20 serves as the catalytic Proton donor/acceptor. Residues 20–25 and 52–53 contribute to the NAD(+) site; these read EYFPPK and TW. FAD-binding positions include 52-53, histidine 81, 111-113, tyrosine 153, aspartate 172, and lysine 179; these read TW and RGD. Substrate is bound at residue aspartate 113. Glutamine 190 is a substrate binding site.

It belongs to the methylenetetrahydrofolate reductase family. It depends on FAD as a cofactor.

It carries out the reaction (6S)-5-methyl-5,6,7,8-tetrahydrofolate + NADP(+) = (6R)-5,10-methylene-5,6,7,8-tetrahydrofolate + NADPH + H(+). It functions in the pathway one-carbon metabolism; tetrahydrofolate interconversion. Its function is as follows. Major methylenetetrahydrofolate reductase required to generate the methyl groups necessary for methionine synthetase to convert homocysteine to methionine. Performs 15 to 20 percent of the total methylenetetrahydrofolate reductase activity of the cells. This chain is Methylenetetrahydrofolate reductase 2 (met11), found in Schizosaccharomyces pombe (strain 972 / ATCC 24843) (Fission yeast).